The following is a 132-amino-acid chain: Small ribosomal subunit protein uS8 (132 aa).

It belongs to the universal ribosomal protein uS8 family. In terms of assembly, part of the 30S ribosomal subunit. Contacts proteins S5 and S12.

One of the primary rRNA binding proteins, it binds directly to 16S rRNA central domain where it helps coordinate assembly of the platform of the 30S subunit. The protein is Small ribosomal subunit protein uS8 of Streptomyces avermitilis (strain ATCC 31267 / DSM 46492 / JCM 5070 / NBRC 14893 / NCIMB 12804 / NRRL 8165 / MA-4680).